Reading from the N-terminus, the 128-residue chain is Small ribosomal subunit protein uS11 (128 aa).

The protein belongs to the universal ribosomal protein uS11 family. As to quaternary structure, part of the 30S ribosomal subunit. Interacts with proteins S7 and S18. Binds to IF-3.

Its function is as follows. Located on the platform of the 30S subunit, it bridges several disparate RNA helices of the 16S rRNA. Forms part of the Shine-Dalgarno cleft in the 70S ribosome. This chain is Small ribosomal subunit protein uS11, found in Chromohalobacter salexigens (strain ATCC BAA-138 / DSM 3043 / CIP 106854 / NCIMB 13768 / 1H11).